Consider the following 262-residue polypeptide: 3-methyl-2-oxobutanoate hydroxymethyltransferase (262 aa).

Mg(2+)-binding residues include D42 and D81. Residues 42 to 43 (DS), D81, and K110 each bind 3-methyl-2-oxobutanoate. Mg(2+) is bound at residue E112. Residue E180 is the Proton acceptor of the active site.

It belongs to the PanB family. In terms of assembly, homodecamer; pentamer of dimers. Requires Mg(2+) as cofactor.

It is found in the cytoplasm. The catalysed reaction is 3-methyl-2-oxobutanoate + (6R)-5,10-methylene-5,6,7,8-tetrahydrofolate + H2O = 2-dehydropantoate + (6S)-5,6,7,8-tetrahydrofolate. The protein operates within cofactor biosynthesis; (R)-pantothenate biosynthesis; (R)-pantoate from 3-methyl-2-oxobutanoate: step 1/2. Its function is as follows. Catalyzes the reversible reaction in which hydroxymethyl group from 5,10-methylenetetrahydrofolate is transferred onto alpha-ketoisovalerate to form ketopantoate. The chain is 3-methyl-2-oxobutanoate hydroxymethyltransferase from Legionella pneumophila (strain Corby).